A 382-amino-acid polypeptide reads, in one-letter code: Leucine carboxyl methyltransferase 1 (382 aa).

Polar residues predominate over residues 1–11; the sequence is MSAPQIPNLNT. Residues 1–45 form a disordered region; the sequence is MSAPQIPNLNTLRRGGGRGRFRARGGPDSSSSSGNKDRVVQGTDN. S-adenosyl-L-methionine-binding positions include R88, G121, D146, 193-194, and E230; that span reads DL.

This sequence belongs to the methyltransferase superfamily. LCMT family.

The enzyme catalyses [phosphatase 2A protein]-C-terminal L-leucine + S-adenosyl-L-methionine = [phosphatase 2A protein]-C-terminal L-leucine methyl ester + S-adenosyl-L-homocysteine. Its function is as follows. Methylates the carboxyl group of the C-terminal leucine residue of protein phosphatase 2A catalytic subunits to form alpha-leucine ester residues. The sequence is that of Leucine carboxyl methyltransferase 1 (ppm1) from Emericella nidulans (strain FGSC A4 / ATCC 38163 / CBS 112.46 / NRRL 194 / M139) (Aspergillus nidulans).